Consider the following 438-residue polypeptide: ATP-dependent RNA helicase RhlB (438 aa).

The Q motif motif lies at 9 to 37 (QRFADLPLHPEVKQALAENGFEFCTPIQA). The Helicase ATP-binding domain occupies 40 to 219 (LPVLLQSKDI…YDHMNEPVKV (180 aa)). Position 53–60 (53–60 (AQTGTGKT)) interacts with ATP. The DEAD box motif lies at 165–168 (DEAD). A Helicase C-terminal domain is found at 243-390 (KMRLLLTLIE…VSNYDSEALL (148 aa)). Residues 395-438 (TPAKIHRKHPSGTRNLRDRSGASRPGAQRSGARPPRHDRTRRHS) form a disordered region. The segment covering 428 to 438 (PPRHDRTRRHS) has biased composition (basic residues).

Belongs to the DEAD box helicase family. RhlB subfamily. In terms of assembly, component of the RNA degradosome, which is a multiprotein complex involved in RNA processing and mRNA degradation.

The protein localises to the cytoplasm. The enzyme catalyses ATP + H2O = ADP + phosphate + H(+). Functionally, DEAD-box RNA helicase involved in RNA degradation. Has RNA-dependent ATPase activity and unwinds double-stranded RNA. This Shewanella baltica (strain OS185) protein is ATP-dependent RNA helicase RhlB.